We begin with the raw amino-acid sequence, 280 residues long: Shikimate kinase (280 aa).

86 to 96 lines the ATP pocket; it reads PPGVGLKGSAA.

The protein belongs to the GHMP kinase family. Archaeal shikimate kinase subfamily.

The protein resides in the cytoplasm. The enzyme catalyses shikimate + ATP = 3-phosphoshikimate + ADP + H(+). The protein operates within metabolic intermediate biosynthesis; chorismate biosynthesis; chorismate from D-erythrose 4-phosphate and phosphoenolpyruvate: step 5/7. This chain is Shikimate kinase (aroK), found in Aeropyrum pernix (strain ATCC 700893 / DSM 11879 / JCM 9820 / NBRC 100138 / K1).